The primary structure comprises 274 residues: MKIELVQLAGRDGDTAYNLSRTLNAIATCAGDTDLLVFPETYLSGFVGGAQLAQVAEPLHGTTLQTLLQAVRQRDVAVVLGFAEVHQGRFYNSSVLVTPEGIALQYRKTHLWPSERSDFSPGDRFTTVLWRGVRVGLLICYDIELPETSRALAQLGAEVVIVTNGNMDPYGPVHRTAIMARAQENQLFAVMVNRVGAGDDGLVFAGGSMAVDPFGRVLFEAGRDEVRHVVELDLDQLKAARRDYDYLKDRRLMLSGEQTEHPDGRRELLIGASQ.

Residues 1-234 enclose the CN hydrolase domain; that stretch reads MKIELVQLAG…EVRHVVELDL (234 aa). The active-site Proton acceptor is Glu40. The Proton donor role is filled by Lys108. Cys140 acts as the Nucleophile in catalysis.

Monomer.

The enzyme catalyses (R)-piperazine-2-carboxamide + H2O = (R)-piperazine-2-carboxylate + NH4(+). The catalysed reaction is beta-alaninamide + H2O = beta-alanine + NH4(+). Its activity is regulated as follows. Completely inhibited by p-chloromercuribenzoate, N-ethylmaleimide, MnSO(4), MnCl(2), CoCl(2), NiCl(2), CuSO(4), CuCl(2), ZnSO(4), ZnCl(2), AgNO(3), CdCl(2), HgCl(2) and PbCl(2). Partially inhibited by FeCl(3) and Fe(NH(4))(2)(SO(4))(2). Slightly enhanced by dithiothreitol. Unaffected by LiBr, H(2)BO(3), NaCl, MgSO(4), MgCl(2), AlCl(3), KCl, CaCl(2), CrCl(3), RbCl, Na(2)MoO(4), (NH(4))(6)Mo(7)O(24), CsCl and BaCl(2). Unaffected by the chelating agents o-phenanthroline, 8-hydroxyquinoline, enthylenediaminetetraacetic acid and alpha,alpha'-dipyridyl. Not inhibited by the carbonyl reagents hydroxylamine, phenylhydrazine, hydrazine, D,L-penicillamine and D-cycloserine. Not affected by the serine protease inhibitor phenylmethanesulfonyl fluoride, the serine/cysteine protease inhibitor leupeptine or the aspartic protease inhibitor pepstatin. Its function is as follows. Hydrolyzes (R)-piperazine-2-carboxamide and (R)-piperazine-2-tert-butylcarboxamide with strict R-stereoselectivity. Also active towards beta-alaninamide, piperidine-3-carboxmide, D-glutaminamide and slightly active towards L-glutaminamide and piperidine-4-carboxamide. The chain is (R)-stereoselective amidase from Pseudomonas sp.